The sequence spans 395 residues: RNA polymerase II elongation factor ELL3 (395 aa).

2 disordered regions span residues 129 to 177 (LTEG…SEPM) and 189 to 281 (PSRE…SPEE). Ser242 is subject to Phosphoserine. A compositionally biased stretch (acidic residues) spans 243 to 260 (QEGEDWGQDEDEEGDEDG). A compositionally biased stretch (low complexity) spans 269–279 (SAPSASESPSP). Residues 283 to 393 (PDYLLQYRAI…LILEFEEKNR (111 aa)) enclose the OCEL domain.

This sequence belongs to the ELL/occludin family. In terms of assembly, component of the little elongation complex (LEC), at least composed of ELL (ELL, ELL2 or ELL3), ZC3H8, ICE1 and ICE2. Component of the super elongation complex (SEC), at least composed of EAF1, EAF2, CDK9, MLLT3/AF9, AFF (AFF1 or AFF4), the P-TEFb complex and ELL (ELL, ELL2 or ELL3). Interacts with AFF4. As to expression, actively expressed in embryonic stem cells (ES cells), while it is weakly expressed in differentiated cells.

It localises to the nucleus. In terms of biological role, enhancer-binding elongation factor that specifically binds enhancers in embryonic stem cells (ES cells), marks them, and is required for their future activation during stem cell specification. Elongation factor component of the super elongation complex (SEC), a complex required to increase the catalytic rate of RNA polymerase II transcription by suppressing transient pausing by the polymerase at multiple sites along the DNA. Component of the little elongation complex (LEC), a complex required to regulate small nuclear RNA (snRNA) gene transcription by RNA polymerase II and III. Does not only bind to enhancer regions of active genes, but also marks the enhancers that are in a poised or inactive state in ES cells and is required for establishing proper RNA polymerase II occupancy at developmentally regulated genes in a cohesin-dependent manner. Probably required for priming developmentally regulated genes for later recruitment of the super elongation complex (SEC), for transcriptional activation during differentiation. Required for recruitment of P-TEFb within SEC during differentiation. Probably preloaded on germ cell chromatin, suggesting that it may prime gene activation by marking enhancers as early as in the germ cells. Promoting epithelial-mesenchymal transition (EMT). The sequence is that of RNA polymerase II elongation factor ELL3 (Ell3) from Mus musculus (Mouse).